Reading from the N-terminus, the 469-residue chain is Cysteine--tRNA ligase (469 aa).

Cys33 is a binding site for Zn(2+). Residues 35 to 45 carry the 'HIGH' region motif; sequence ATVQGLPHIGH. 3 residues coordinate Zn(2+): Cys211, His236, and Glu240. Positions 267–271 match the 'KMSKS' region motif; it reads KMSKS. Position 270 (Lys270) interacts with ATP.

Belongs to the class-I aminoacyl-tRNA synthetase family. Monomer. The cofactor is Zn(2+).

It is found in the cytoplasm. It catalyses the reaction tRNA(Cys) + L-cysteine + ATP = L-cysteinyl-tRNA(Cys) + AMP + diphosphate. The protein is Cysteine--tRNA ligase (cysS) of Mycobacterium tuberculosis (strain CDC 1551 / Oshkosh).